The following is a 393-amino-acid chain: O-phospho-L-seryl-tRNA:Cys-tRNA synthase 1 (393 aa).

Pyridoxal 5'-phosphate contacts are provided by residues A85–R86, N190, and S213–H215. Residue K216 is modified to N6-(pyridoxal phosphate)lysine.

Belongs to the SepCysS family. As to quaternary structure, homodimer. Interacts with SepRS. It depends on pyridoxal 5'-phosphate as a cofactor.

It catalyses the reaction O-phospho-L-seryl-tRNA(Cys) + hydrogen sulfide + H(+) = L-cysteinyl-tRNA(Cys) + phosphate. Its function is as follows. Converts O-phospho-L-seryl-tRNA(Cys) (Sep-tRNA(Cys)) to L-cysteinyl-tRNA(Cys) (Cys-tRNA(Cys)). The protein is O-phospho-L-seryl-tRNA:Cys-tRNA synthase 1 of Methanospirillum hungatei JF-1 (strain ATCC 27890 / DSM 864 / NBRC 100397 / JF-1).